Consider the following 106-residue polypeptide: Small ribosomal subunit protein uS10 (106 aa).

It belongs to the universal ribosomal protein uS10 family. As to quaternary structure, part of the 30S ribosomal subunit.

Functionally, involved in the binding of tRNA to the ribosomes. This is Small ribosomal subunit protein uS10 from Pyrobaculum neutrophilum (strain DSM 2338 / JCM 9278 / NBRC 100436 / V24Sta) (Thermoproteus neutrophilus).